The sequence spans 359 residues: Heat-inducible transcription repressor HrcA (359 aa).

It belongs to the HrcA family.

Functionally, negative regulator of class I heat shock genes (grpE-dnaK-dnaJ and groELS operons). Prevents heat-shock induction of these operons. This Roseiflexus sp. (strain RS-1) protein is Heat-inducible transcription repressor HrcA.